Reading from the N-terminus, the 182-residue chain is Adenine phosphoribosyltransferase (182 aa).

It belongs to the purine/pyrimidine phosphoribosyltransferase family. As to quaternary structure, homodimer.

It is found in the cytoplasm. It carries out the reaction AMP + diphosphate = 5-phospho-alpha-D-ribose 1-diphosphate + adenine. It functions in the pathway purine metabolism; AMP biosynthesis via salvage pathway; AMP from adenine: step 1/1. Catalyzes a salvage reaction resulting in the formation of AMP, that is energically less costly than de novo synthesis. This chain is Adenine phosphoribosyltransferase, found in Wolinella succinogenes (strain ATCC 29543 / DSM 1740 / CCUG 13145 / JCM 31913 / LMG 7466 / NCTC 11488 / FDC 602W) (Vibrio succinogenes).